The following is a 217-amino-acid chain: uncharacterized protein (217 aa).

A helical membrane pass occupies residues 26 to 48 (VFMRGYVVGLVLALMLVTAPAMA).

It localises to the membrane. This is an uncharacterized protein from Archaeoglobus fulgidus (strain ATCC 49558 / DSM 4304 / JCM 9628 / NBRC 100126 / VC-16).